A 366-amino-acid polypeptide reads, in one-letter code: Major outer membrane protein (366 aa).

A signal peptide spans 1–21 (MKKTLLATAIAGAMAASGAQA).

This sequence belongs to the Gram-negative porin family. Homotrimer.

The protein localises to the cell outer membrane. The chain is Major outer membrane protein from Halomonas elongata (strain ATCC 33173 / DSM 2581 / NBRC 15536 / NCIMB 2198 / 1H9).